We begin with the raw amino-acid sequence, 204 residues long: Quinol oxidase subunit 3 (204 aa).

Helical transmembrane passes span 27 to 47 (FWIF…TFFV), 66 to 86 (LVMI…IAVH), 95 to 115 (GVVI…GCEI), 140 to 160 (LLGT…GILI), and 184 to 204 (FLDV…LGGL).

It belongs to the cytochrome c oxidase subunit 3 family.

The protein resides in the cell membrane. It carries out the reaction 2 a quinol + O2 = 2 a quinone + 2 H2O. In terms of biological role, catalyzes quinol oxidation with the concomitant reduction of oxygen to water. Major component for energy conversion during vegetative growth. The polypeptide is Quinol oxidase subunit 3 (qoxC) (Bacillus spizizenii (strain ATCC 23059 / NRRL B-14472 / W23) (Bacillus subtilis subsp. spizizenii)).